A 548-amino-acid chain; its full sequence is Folylpolyglutamate synthase (548 aa).

130-133 (GKGS) is a binding site for ATP. Mg(2+) contacts are provided by S157, E234, and H262. Positions 382 and 396 each coordinate ATP.

The protein belongs to the folylpolyglutamate synthase family. Requires a monovalent cation as cofactor.

It localises to the mitochondrion inner membrane. Its subcellular location is the mitochondrion matrix. It is found in the cytoplasm. It catalyses the reaction (6S)-5,6,7,8-tetrahydrofolyl-(gamma-L-Glu)(n) + L-glutamate + ATP = (6S)-5,6,7,8-tetrahydrofolyl-(gamma-L-Glu)(n+1) + ADP + phosphate + H(+). Its pathway is cofactor biosynthesis; tetrahydrofolylpolyglutamate biosynthesis. Its function is as follows. Catalyzes conversion of folates to polyglutamate derivatives allowing concentration of folate compounds in the cell and the intracellular retention of these cofactors, which are important substrates for most of the folate-dependent enzymes that are involved in one-carbon transfer reactions involved in purine, pyrimidine and amino acid synthesis. Required for methionine synthesis and maintenance of intact mitochondrial DNA. Involved in telomere maintenance. This Saccharomyces cerevisiae (strain AWRI796) (Baker's yeast) protein is Folylpolyglutamate synthase.